Reading from the N-terminus, the 264-residue chain is Phosphate import ATP-binding protein PstB 1 (264 aa).

The region spanning 20 to 259 is the ABC transporter domain; it reads LETRDLNIFY…PKIKLTEDYI (240 aa). 52–59 contributes to the ATP binding site; that stretch reads GASGSGKS.

Belongs to the ABC transporter superfamily. Phosphate importer (TC 3.A.1.7) family. As to quaternary structure, the complex is composed of two ATP-binding proteins (PstB), two transmembrane proteins (PstC and PstA) and a solute-binding protein (PstS).

It localises to the cell membrane. It catalyses the reaction phosphate(out) + ATP + H2O = ADP + 2 phosphate(in) + H(+). In terms of biological role, part of the ABC transporter complex PstSACB involved in phosphate import. Responsible for energy coupling to the transport system. This is Phosphate import ATP-binding protein PstB 1 from Ligilactobacillus salivarius (strain UCC118) (Lactobacillus salivarius).